A 595-amino-acid polypeptide reads, in one-letter code: Estrogen receptor (595 aa).

Residues 1–184 (MTMTLHTKAS…AMESAKETRY (184 aa)) are modulating (transactivation AF-1); mediates interaction with MACROD1. Serine 10 carries O-linked (GlcNAc) serine glycosylation. The segment at 35–47 (LERPLGEVYVDGS) is required for interaction with NCOA1. The interaction with DDX5; self-association stretch occupies residues 35–174 (LERPLGEVYV…LASTGDKGSM (140 aa)). A phosphoserine; by CDK2 mark is found at serine 104 and serine 106. Phosphoserine is present on serine 118. Positions 149-173 (FYRPTSDNRRQSGRERLASTGDKGS) are disordered. Residues 154–165 (SDNRRQSGRERL) show a composition bias toward basic and acidic residues. Serine 167 carries the phosphoserine; by CK2 modification. NR C4-type zinc fingers lie at residues 185–205 (CAVCNDYASGYHYGVWSCEGC) and 221–245 (CPATNQCTIDKNRRKSCQACRLRKC). Residues 185–250 (CAVCNDYASG…RLRKCYEVGM (66 aa)) constitute a DNA-binding region (nuclear receptor). Positions 185-310 (CAVCNDYASG…TKKNSPALSL (126 aa)) are mediates interaction with DNTTIP2. The interval 251 to 310 (MKGGIRKDRRGGRMLKHKRQRDEGEGRNEVGSSGDVRASNLWPSPLLIKHTKKNSPALSL) is hinge. A compositionally biased stretch (basic residues) spans 257–269 (KDRRGGRMLKHKR). The tract at residues 257-287 (KDRRGGRMLKHKRQRDEGEGRNEVGSSGDVR) is disordered. Arginine 260 is subject to Asymmetric dimethylarginine; by PRMT1. The tract at residues 262 to 595 (GRMLKHKRQR…EEAGAFPTTV (334 aa)) is interaction with AKAP13. The segment at 264–595 (MLKHKRQRDE…EEAGAFPTTV (332 aa)) is self-association. In terms of domain architecture, NR LBD spans 311–547 (TADQMVSALL…DLLLEMLDAH (237 aa)). Residues 311–595 (TADQMVSALL…EEAGAFPTTV (285 aa)) form a transactivation AF-2 region. Glutamate 353 and arginine 394 together coordinate 17beta-estradiol. Residue cysteine 447 is the site of S-palmitoyl cysteine attachment. Residue histidine 524 coordinates 17beta-estradiol. Position 537 is a phosphotyrosine; by Tyr-kinases (tyrosine 537). Threonine 571 carries O-linked (GlcNAc) threonine glycosylation.

It belongs to the nuclear hormone receptor family. NR3 subfamily. As to quaternary structure, binds DNA as a homodimer. Can form a heterodimer with ESR2. Interacts with coactivator NCOA5. Interacts with PELP1, the interaction is enhanced by 17-beta-estradiol; the interaction increases ESR1 transcriptional activity. Interacts with NCOA7; the interaction is ligand-inducible. Interacts with AKAP13, CUEDC2, HEXIM1, KDM5A, MAP1S, SMARD1, and UBE1C. Interacts with MUC1; the interaction is stimulated by 7 beta-estradiol (E2) and enhances ESR1-mediated transcription. Interacts with DNTTIP2, and UIMC1. Interacts with KMT2D/MLL2. Interacts with ATAD2; the interaction is enhanced by estradiol. Interacts with KIF18A and LDB1. Interacts with RLIM (via its C-terminus). Interacts with MACROD1. Interacts with SH2D4A and PLCG. Interacts with SH2D4A; the interaction blocks binding to PLCG and inhibits estrogen-induced cell proliferation. Interacts with DYNLL1. Interacts with CCDC62; the interaction requires estradiol and appears to enhance the transcription of target genes. Interacts with NR2C1; the interaction prevents homodimerization of ESR1 and suppresses its transcriptional activity and cell growth. Interacts with DNAAF4. Interacts with PRMT2. Interacts with RBFOX2. Interacts with EP300; the interaction is estrogen-dependent and enhanced by CITED1. Interacts with CITED1; the interaction is estrogen-dependent. Interacts with FAM120B, FOXL2, PHB2 and SLC30A9. Interacts with coactivators NCOA3 and NCOA6. Interacts with STK3/MST2 only in the presence of SAV1 and vice-versa. Binds to CSNK1D. Interacts with NCOA2; NCOA2 can interact with ESR1 AF-1 and AF-2 domains simultaneously and mediate their transcriptional synergy. Interacts with DDX5. Interacts with NCOA1; the interaction seems to require a self-association of N-terminal and C-terminal regions. Interacts with ZNF366, DDX17, NFKB1, RELA, SP1 and SP3. Interacts with NRIP1. Interacts with GPER1; the interaction occurs in an estrogen-dependent manner. Interacts with CLOCK and the interaction is stimulated by estrogen. Interacts with TRIP4 (ufmylated); estrogen dependent. Interacts with LMTK3; the interaction phosphorylates ESR1 (in vitro) and protects it against proteasomal degradation. Interacts with CCAR2 (via N-terminus) in a ligand-independent manner. Interacts with ZFHX3. Interacts with SFR1 in a ligand-dependent and -independent manner. Interacts with DCAF13, LATS1 and DCAF1; regulates ESR1 ubiquitination and ubiquitin-mediated proteasomal degradation. Interacts (via DNA-binding domain) with POU4F2 (C-terminus); this interaction increases the estrogen receptor ESR1 transcriptional activity in a DNA- and ligand 17-beta-estradiol-independent manner. Interacts with ESRRB isoform 1. Interacts with UBE3A and WBP2. Interacts with GTF2B. Interacts with RBM39. In the absence of hormonal ligand, interacts with TACC1. Interacts with PI3KR1 or PI3KR2 and PTK2/FAK1. Interacts with SRC. Interacts with BAG1; the interaction is promoted in the absence of estradiol (17-beta-estradiol/E2). Interacts with and ubiquitinated by STUB1; the interaction is promoted in the absence of estradiol (17-beta-estradiol/E2). Interacts with NEDD8. In terms of processing, ubiquitinated; regulated by LATS1 via DCAF1 it leads to ESR1 proteasomal degradation. Deubiquitinated by OTUB1. Ubiquitinated by STUB1/CHIP; in the CA1 hippocampal region following loss of endogenous circulating estradiol (17-beta-estradiol/E2). Ubiquitinated by UBR5, leading to its degradation: UBR5 specifically recognizes and binds ligand-bound ESR1 when it is not associated with coactivators (NCOAs). In presence of NCOAs, the UBR5-degron is not accessible, preventing its ubiquitination and degradation. Post-translationally, phosphorylated by cyclin A/CDK2 and CK1. Phosphorylation probably enhances transcriptional activity. Dephosphorylation at Ser-118 by PPP5C inhibits its transactivation activity. Phosphorylated by LMTK3 (in vitro). Palmitoylated at Cys-447 by ZDHHC7 and ZDHHC21. Palmitoylation is required for plasma membrane targeting and for rapid intracellular signaling via ERK and AKT kinases and cAMP generation, but not for signaling mediated by the nuclear hormone receptor. In terms of processing, dimethylated by PRMT1 at Arg-260. The methylation may favor cytoplasmic localization. Demethylated by JMJD6 at Arg-260.

The protein resides in the nucleus. It localises to the cytoplasm. The protein localises to the golgi apparatus. It is found in the cell membrane. Its function is as follows. Nuclear hormone receptor. The steroid hormones and their receptors are involved in the regulation of eukaryotic gene expression and affect cellular proliferation and differentiation in target tissues. Ligand-dependent nuclear transactivation involves either direct homodimer binding to a palindromic estrogen response element (ERE) sequence or association with other DNA-binding transcription factors, such as AP-1/c-Jun, c-Fos, ATF-2, Sp1 and Sp3, to mediate ERE-independent signaling. Ligand binding induces a conformational change allowing subsequent or combinatorial association with multiprotein coactivator complexes through LXXLL motifs of their respective components. Mutual transrepression occurs between the estrogen receptor (ER) and NF-kappa-B in a cell-type specific manner. Decreases NF-kappa-B DNA-binding activity and inhibits NF-kappa-B-mediated transcription from the IL6 promoter and displace RELA/p65 and associated coregulators from the promoter. Recruited to the NF-kappa-B response element of the CCL2 and IL8 promoters and can displace CREBBP. Present with NF-kappa-B components RELA/p65 and NFKB1/p50 on ERE sequences. Can also act synergistically with NF-kappa-B to activate transcription involving respective recruitment adjacent response elements; the function involves CREBBP. Can activate the transcriptional activity of TFF1. Also mediates membrane-initiated estrogen signaling involving various kinase cascades. Essential for MTA1-mediated transcriptional regulation of BRCA1 and BCAS3. Maintains neuronal survival in response to ischemic reperfusion injury when in the presence of circulating estradiol (17-beta-estradiol/E2). This is Estrogen receptor (ESR1) from Felis catus (Cat).